The primary structure comprises 205 residues: Large ribosomal subunit protein uL13 (205 aa).

Belongs to the universal ribosomal protein uL13 family.

In Drosophila melanogaster (Fruit fly), this protein is Large ribosomal subunit protein uL13 (RpL13A).